The following is a 221-amino-acid chain: Uracil-DNA glycosylase (221 aa).

Residue Asp65 is the Proton acceptor of the active site.

Belongs to the uracil-DNA glycosylase (UDG) superfamily. UNG family.

It is found in the cytoplasm. It catalyses the reaction Hydrolyzes single-stranded DNA or mismatched double-stranded DNA and polynucleotides, releasing free uracil.. Its function is as follows. Excises uracil residues from the DNA which can arise as a result of misincorporation of dUMP residues by DNA polymerase or due to deamination of cytosine. The sequence is that of Uracil-DNA glycosylase from Flavobacterium johnsoniae (strain ATCC 17061 / DSM 2064 / JCM 8514 / BCRC 14874 / CCUG 350202 / NBRC 14942 / NCIMB 11054 / UW101) (Cytophaga johnsonae).